The following is a 23-amino-acid chain: Hemocyanin subunit 4 (23 aa).

Belongs to the tyrosinase family. Hemocyanin subfamily. In terms of tissue distribution, hemolymph.

The protein resides in the secreted. It is found in the extracellular space. Hemocyanins are copper-containing oxygen carriers occurring freely dissolved in the hemolymph of many mollusks and arthropods. This Carcinus maenas (Common shore crab) protein is Hemocyanin subunit 4.